Reading from the N-terminus, the 271-residue chain is Neurexophilin-1 (271 aa).

The signal sequence occupies residues 1 to 21 (MQAACWYVLFLLQPTVYLVTC). The segment at 22–97 (ANLTNGGKSE…WDWLRNSTDL (76 aa)) is II. N23, N68, N93, N146, N156, and N162 each carry an N-linked (GlcNAc...) asparagine glycan. The interval 98–176 (QEPRPRAKRR…LVPPTKIVEF (79 aa)) is III. The IV (linker domain) stretch occupies residues 177–185 (DLAQQTVID). The tract at residues 186-271 (AKDSKSFNCR…HSDTPYFPSG (86 aa)) is v (Cys-rich).

Belongs to the neurexophilin family.

Its subcellular location is the secreted. Functionally, may be signaling molecules that resemble neuropeptides and that act by binding to alpha-neurexins and possibly other receptors. The chain is Neurexophilin-1 (NXPH1) from Homo sapiens (Human).